The primary structure comprises 246 residues: MMQKCLSPKTLIAALVVLSACGRADHLGKAPSFTPNTESPEHVAMLWPGLPLHTQPQRSVDRASLWSGGQNSLLGDQRAMKKGDILTVVIEIDEKAEISNDTNRSRSGSESLGVPHLLGLPQRIDEKLPEGASMSNAVAVDSSSASGGKGSVKRKEKLTLRVAATVVDVLPNGVLSITGSQELRVNFELRELLVSGYVRPEDISRQNEITYDKIASARVSYGGRGQITDVQQPRYGQQVLDMVLPF.

The signal sequence occupies residues 1 to 20; it reads MMQKCLSPKTLIAALVVLSA. Residue Cys-21 is the site of N-palmitoyl cysteine attachment. A lipid anchor (S-diacylglycerol cysteine) is attached at Cys-21.

The protein belongs to the FlgH family. In terms of assembly, the basal body constitutes a major portion of the flagellar organelle and consists of four rings (L,P,S, and M) mounted on a central rod.

It localises to the cell outer membrane. The protein localises to the bacterial flagellum basal body. Its function is as follows. Assembles around the rod to form the L-ring and probably protects the motor/basal body from shearing forces during rotation. The protein is Flagellar L-ring protein of Ruegeria pomeroyi (strain ATCC 700808 / DSM 15171 / DSS-3) (Silicibacter pomeroyi).